Here is a 344-residue protein sequence, read N- to C-terminus: Methionine import ATP-binding protein MetN (344 aa).

Residues 2 to 241 (IEINRVNKIF…PKTALAQEFI (240 aa)) enclose the ABC transporter domain. Residue 38–45 (GSSGAGKS) coordinates ATP.

Belongs to the ABC transporter superfamily. Methionine importer (TC 3.A.1.24) family. As to quaternary structure, the complex is composed of two ATP-binding proteins (MetN), two transmembrane proteins (MetI) and a solute-binding protein (MetQ).

The protein localises to the cell inner membrane. The enzyme catalyses L-methionine(out) + ATP + H2O = L-methionine(in) + ADP + phosphate + H(+). It carries out the reaction D-methionine(out) + ATP + H2O = D-methionine(in) + ADP + phosphate + H(+). Functionally, part of the ABC transporter complex MetNIQ involved in methionine import. Responsible for energy coupling to the transport system. The protein is Methionine import ATP-binding protein MetN of Aliivibrio fischeri (strain ATCC 700601 / ES114) (Vibrio fischeri).